The chain runs to 327 residues: tRNA-dihydrouridine(20/20a) synthase (327 aa).

Residues 11–13 and Gln63 contribute to the FMN site; that span reads PML. Cys93 acts as the Proton donor in catalysis. FMN-binding positions include Lys132, His165, 205–207, and 227–228; these read NGG and GR.

It belongs to the Dus family. DusA subfamily. FMN is required as a cofactor.

The enzyme catalyses 5,6-dihydrouridine(20) in tRNA + NADP(+) = uridine(20) in tRNA + NADPH + H(+). It catalyses the reaction 5,6-dihydrouridine(20) in tRNA + NAD(+) = uridine(20) in tRNA + NADH + H(+). The catalysed reaction is 5,6-dihydrouridine(20a) in tRNA + NADP(+) = uridine(20a) in tRNA + NADPH + H(+). It carries out the reaction 5,6-dihydrouridine(20a) in tRNA + NAD(+) = uridine(20a) in tRNA + NADH + H(+). Catalyzes the synthesis of 5,6-dihydrouridine (D), a modified base found in the D-loop of most tRNAs, via the reduction of the C5-C6 double bond in target uridines. Specifically modifies U20 and U20a in tRNAs. This Vibrio cholerae serotype O1 (strain ATCC 39315 / El Tor Inaba N16961) protein is tRNA-dihydrouridine(20/20a) synthase.